A 156-amino-acid polypeptide reads, in one-letter code: tRNA (cytidine(34)-2'-O)-methyltransferase (156 aa).

Residues Gly-102, Leu-124, and Ser-132 each contribute to the S-adenosyl-L-methionine site.

Belongs to the class IV-like SAM-binding methyltransferase superfamily. RNA methyltransferase TrmH family. TrmL subfamily. In terms of assembly, homodimer.

The protein resides in the cytoplasm. It catalyses the reaction cytidine(34) in tRNA + S-adenosyl-L-methionine = 2'-O-methylcytidine(34) in tRNA + S-adenosyl-L-homocysteine + H(+). It carries out the reaction 5-carboxymethylaminomethyluridine(34) in tRNA(Leu) + S-adenosyl-L-methionine = 5-carboxymethylaminomethyl-2'-O-methyluridine(34) in tRNA(Leu) + S-adenosyl-L-homocysteine + H(+). Its function is as follows. Methylates the ribose at the nucleotide 34 wobble position in the two leucyl isoacceptors tRNA(Leu)(CmAA) and tRNA(Leu)(cmnm5UmAA). Catalyzes the methyl transfer from S-adenosyl-L-methionine to the 2'-OH of the wobble nucleotide. In Burkholderia pseudomallei (strain 1106a), this protein is tRNA (cytidine(34)-2'-O)-methyltransferase.